The sequence spans 116 residues: Early 4 ORF3 protein (116 aa).

It belongs to the adenoviridae E4 ORF3 family. Homodimer. Multimerizes through C-terminus tail by reciprocal or nonreciprocal interactions. Interacts with host PML isoform 2 C-terminal disordered region. Interacts with E1B-55k; this interaction is necessary for E1B 55 kDa protein to localize to the nuclear matrix fraction of the cell. May interact with host TRIM24, CREBBP, EP300, PRKDC and the MRN complex MRE11/RAD50/NBS1; these interactions may happen through nuclear bodies complexes.

Its subcellular location is the host nucleus. Functionally, forms a multivalent network in host nucleus that inhibits nuclear bodies and prevents antiviral cellular activities. The network is made of multimerized dimers and surrounds adenovirus replication centers and nucleolus. Plays a role in splicing of the major late transcript. Prevents viral genome concatemer formation. The chain is Early 4 ORF3 protein from Human adenovirus C serotype 2 (HAdV-2).